A 548-amino-acid chain; its full sequence is Chaperonin GroEL (548 aa).

ATP contacts are provided by residues 30–33, Lys-51, 87–91, Gly-415, 479–481, and Asp-495; these read TLGP, DGTTT, and NAA. The disordered stretch occupies residues 524–548; it reads LPKEDKSSDSSSSPAGGMGGMGGMM. The segment covering 539-548 has biased composition (gly residues); it reads GGMGGMGGMM.

It belongs to the chaperonin (HSP60) family. In terms of assembly, forms a cylinder of 14 subunits composed of two heptameric rings stacked back-to-back. Interacts with the co-chaperonin GroES.

The protein resides in the cytoplasm. It carries out the reaction ATP + H2O + a folded polypeptide = ADP + phosphate + an unfolded polypeptide.. Functionally, together with its co-chaperonin GroES, plays an essential role in assisting protein folding. The GroEL-GroES system forms a nano-cage that allows encapsulation of the non-native substrate proteins and provides a physical environment optimized to promote and accelerate protein folding. The polypeptide is Chaperonin GroEL (Buchnera aphidicola subsp. Acyrthosiphon pisum (strain 5A)).